A 159-amino-acid chain; its full sequence is Succinate dehydrogenase [ubiquinone] cytochrome b small subunit, mitochondrial (159 aa).

A mitochondrion-targeting transit peptide spans 1 to 56 (MAVLWRLSAVCGAQGGRALLLRTPVVRPAHISAFLQDRPIPEWCGVQHIHLSPGHH). Residues 57-63 (SGSKAAS) lie on the Mitochondrial matrix side of the membrane. Residues 64-85 (LHWTSERVVSVLLLGLLPAAYL) traverse the membrane as a helical segment. The Mitochondrial intermembrane portion of the chain corresponds to 86 to 90 (NPCSA). Residues 91-111 (MDYSLAATLTLHGHWGLGQVV) form a helical membrane-spanning segment. Heme b is bound at residue His102. At 112–120 (TDYVHGDAS) the chain is on the mitochondrial matrix side. Position 114 (Tyr114) interacts with a ubiquinone. A helical transmembrane segment spans residues 121-142 (QKAAKAGLLALSALTFAGLCYF). Residues 143 to 159 (NYHDVGICKAVAMLWKL) lie on the Mitochondrial intermembrane side of the membrane.

Belongs to the CybS family. Component of complex II composed of four subunits: the flavoprotein (FP) SDHA, iron-sulfur protein (IP) SDHB, and a cytochrome b560 composed of SDHC and SDHD.

It localises to the mitochondrion inner membrane. It functions in the pathway carbohydrate metabolism; tricarboxylic acid cycle. In terms of biological role, membrane-anchoring subunit of succinate dehydrogenase (SDH) that is involved in complex II of the mitochondrial electron transport chain and is responsible for transferring electrons from succinate to ubiquinone (coenzyme Q). SDH also oxidizes malate to the non-canonical enol form of oxaloacetate, enol-oxaloacetate. Enol-oxaloacetate, which is a potent inhibitor of the succinate dehydrogenase activity, is further isomerized into keto-oxaloacetate. This chain is Succinate dehydrogenase [ubiquinone] cytochrome b small subunit, mitochondrial (SDHD), found in Pongo abelii (Sumatran orangutan).